Reading from the N-terminus, the 287-residue chain is Probable endonuclease LCL3 (287 aa).

Positions 1 to 40 are disordered; sequence MPWPFGPSGSSEAPPPQKPRDDKVEGREPAKSWNSLLPKP. A compositionally biased stretch (basic and acidic residues) spans 18–30; that stretch reads KPRDDKVEGREPA. A helical transmembrane segment spans residues 50 to 67; it reads WAPVFLTAVGSLAAFMFY. Residues 88 to 246 enclose the TNase-like domain; sequence RSLLGRVTSV…KAKKLGLWSI (159 aa). Arg137 is a catalytic residue. Residue Asp142 participates in Ca(2+) binding. Active-site residues include Glu145 and Arg185. Over residues 254–272 the composition is skewed to basic and acidic residues; that stretch reads PRDFKNRTQGNEKSERDVE. The interval 254–278 is disordered; that stretch reads PRDFKNRTQGNEKSERDVEGSTVQK.

The protein belongs to the LCL3 family.

It is found in the mitochondrion. The protein resides in the membrane. The chain is Probable endonuclease LCL3 (LCL3) from Verticillium alfalfae (strain VaMs.102 / ATCC MYA-4576 / FGSC 10136) (Verticillium wilt of alfalfa).